The chain runs to 100 residues: MINEERLLKVLRGPLISEKATMAAEGNNTIVFKVAINATKKEIKAAVEKLFEVEVKSVNTLITKGKTKRQGLRQGRRSDVKKAYVILKEGQDLDFVGGAE.

Belongs to the universal ribosomal protein uL23 family. Part of the 50S ribosomal subunit. Contacts protein L29, and trigger factor when it is bound to the ribosome.

Its function is as follows. One of the early assembly proteins it binds 23S rRNA. One of the proteins that surrounds the polypeptide exit tunnel on the outside of the ribosome. Forms the main docking site for trigger factor binding to the ribosome. The polypeptide is Large ribosomal subunit protein uL23 (Aliivibrio fischeri (strain MJ11) (Vibrio fischeri)).